The primary structure comprises 59 residues: U-myrmeciitoxin(01)-Mg5b (59 aa).

The N-terminal stretch at 1-21 (MRLSYLSLALAIIFVLTIMHA) is a signal peptide. Positions 22 to 38 (SNVEAKASADPEPDAVG) are excised as a propeptide.

In terms of tissue distribution, expressed by the venom gland.

It localises to the secreted. In terms of biological role, may have antimicrobial properties, like most ant linear peptides. This chain is U-myrmeciitoxin(01)-Mg5b, found in Myrmecia gulosa (Red bulldog ant).